Here is a 198-residue protein sequence, read N- to C-terminus: Protein GrpE (198 aa).

It belongs to the GrpE family. Homodimer.

Its subcellular location is the cytoplasm. Functionally, participates actively in the response to hyperosmotic and heat shock by preventing the aggregation of stress-denatured proteins, in association with DnaK and GrpE. It is the nucleotide exchange factor for DnaK and may function as a thermosensor. Unfolded proteins bind initially to DnaJ; upon interaction with the DnaJ-bound protein, DnaK hydrolyzes its bound ATP, resulting in the formation of a stable complex. GrpE releases ADP from DnaK; ATP binding to DnaK triggers the release of the substrate protein, thus completing the reaction cycle. Several rounds of ATP-dependent interactions between DnaJ, DnaK and GrpE are required for fully efficient folding. This is Protein GrpE from Actinobacillus pleuropneumoniae serotype 7 (strain AP76).